We begin with the raw amino-acid sequence, 528 residues long: G patch domain-containing protein 2 (528 aa).

Residues 36-119 are disordered; it reads LEESSEQARG…NKKDHSDSDD (84 aa). Residues 63–77 are compositionally biased toward basic residues; sequence RQARKRRGRKRRSYN. Positions 98-117 are enriched in basic and acidic residues; sequence EPSKDYRENHNNNKKDHSDS. A phosphoserine mark is found at serine 115, serine 117, serine 146, and serine 195. 2 disordered regions span residues 232–282 and 487–528; these read SEET…GDDE and GRDG…GKSA. Over residues 239-252 the composition is skewed to basic and acidic residues; the sequence is NKDKMECEEQKVSD. Positions 467–513 constitute a G-patch domain; sequence ENNIGNRMLQNMGWTPGSGLGRDGKGISEPIQAMQRPKGLGLGFPLP. The segment covering 514-528 has biased composition (polar residues); that stretch reads KSTSATTTPNAGKSA.

In terms of assembly, interacts with DHX15. As to expression, testis.

It is found in the nucleus speckle. Its subcellular location is the nucleus. It localises to the nucleolus. Enhances the ATPase activity of DHX15 in vitro. This Homo sapiens (Human) protein is G patch domain-containing protein 2 (GPATCH2).